Here is a 373-residue protein sequence, read N- to C-terminus: GTP cyclohydrolase 1 type 2 homolog (373 aa).

A divalent metal cation-binding residues include H68, H69, D107, H333, and E336.

The protein belongs to the GTP cyclohydrolase I type 2/NIF3 family. Homohexamer.

The protein is GTP cyclohydrolase 1 type 2 homolog (yqfO) of Bacillus subtilis (strain 168).